We begin with the raw amino-acid sequence, 289 residues long: Serine/threonine-protein phosphatase Pgam5, mitochondrial (289 aa).

A helical transmembrane segment spans residues 7–23 (LVCGAGAGLAAFYLSRL).

The protein belongs to the phosphoglycerate mutase family. BPG-dependent PGAM subfamily. In terms of assembly, interacts with Pk92B/ASK1.

The protein resides in the mitochondrion outer membrane. The enzyme catalyses O-phospho-L-seryl-[protein] + H2O = L-seryl-[protein] + phosphate. It carries out the reaction O-phospho-L-threonyl-[protein] + H2O = L-threonyl-[protein] + phosphate. In terms of biological role, displays phosphatase activity for serine/threonine residues, and dephosphorylates and activates Pk92B kinase. Has apparently no phosphoglycerate mutase activity. The protein is Serine/threonine-protein phosphatase Pgam5, mitochondrial of Drosophila ananassae (Fruit fly).